Here is a 313-residue protein sequence, read N- to C-terminus: MSQEFAHLSVLLNETVDGLNIQSDGIYIDGTFGRGGHSRHVLSHLGENGRLIAIDRDPQAIEAAKQFADDPRFQIVHGGFGQLAEYVEELGLTGKINGVLLDLGVSSPQLDDAERGFSFLRDGPLDMRMDNSQGQTAAQWIARAEIEDMAWVFKTYGEEKNSRHIARCIAADREKTPFLRTKDLADLIARITKNKERNKHPATRVFQAIRIYINSELEQIDQALEGALAVLAPQGRLSVISFHSLEDRMVKRFIRRHSQGESVPHGLPIMEAELNKSRKLKAVSKALKPSDAELELNPRARSSVLRVAERLDY.

Residues 35-37, Asp55, Phe80, Asp102, and Gln109 each bind S-adenosyl-L-methionine; that span reads GGH.

This sequence belongs to the methyltransferase superfamily. RsmH family.

It is found in the cytoplasm. It catalyses the reaction cytidine(1402) in 16S rRNA + S-adenosyl-L-methionine = N(4)-methylcytidine(1402) in 16S rRNA + S-adenosyl-L-homocysteine + H(+). Its function is as follows. Specifically methylates the N4 position of cytidine in position 1402 (C1402) of 16S rRNA. This is Ribosomal RNA small subunit methyltransferase H from Shewanella frigidimarina (strain NCIMB 400).